Reading from the N-terminus, the 525-residue chain is Chromosomal replication initiator protein DnaA (525 aa).

The segment at 1-71 (MNDFWQHCSA…ADLAREFWNT (71 aa)) is domain I, interacts with DnaA modulators. Residues 71–188 (TPIEVQFVLD…GEADSMYERS (118 aa)) form a domain II region. The tract at residues 160-182 (AAAGRRTWRPGPGAAPANGGEAD) is disordered. Positions 169-181 (PGPGAAPANGGEA) are enriched in low complexity. Positions 189 to 405 (KLNPVLTFDN…GALRKILAYS (217 aa)) are domain III, AAA+ region. Residues Gly233, Gly235, Lys236, and Thr237 each contribute to the ATP site. The segment at 406 to 525 (KFHGREISIE…LHVLEQTLKG (120 aa)) is domain IV, binds dsDNA.

Belongs to the DnaA family. As to quaternary structure, oligomerizes as a right-handed, spiral filament on DNA at oriC.

The protein localises to the cytoplasm. Functionally, plays an essential role in the initiation and regulation of chromosomal replication. ATP-DnaA binds to the origin of replication (oriC) to initiate formation of the DNA replication initiation complex once per cell cycle. Binds the DnaA box (a 9 base pair repeat at the origin) and separates the double-stranded (ds)DNA. Forms a right-handed helical filament on oriC DNA; dsDNA binds to the exterior of the filament while single-stranded (ss)DNA is stabiized in the filament's interior. The ATP-DnaA-oriC complex binds and stabilizes one strand of the AT-rich DNA unwinding element (DUE), permitting loading of DNA polymerase. After initiation quickly degrades to an ADP-DnaA complex that is not apt for DNA replication. Binds acidic phospholipids. This is Chromosomal replication initiator protein DnaA from Burkholderia cenocepacia (strain ATCC BAA-245 / DSM 16553 / LMG 16656 / NCTC 13227 / J2315 / CF5610) (Burkholderia cepacia (strain J2315)).